The primary structure comprises 38 residues: Photosystem II reaction center protein L (38 aa).

The chain crosses the membrane as a helical span at residues 17-37 (SLYWGLLCIFVLAILFSSYFF).

The protein belongs to the PsbL family. As to quaternary structure, PSII is composed of 1 copy each of membrane proteins PsbA, PsbB, PsbC, PsbD, PsbE, PsbF, PsbH, PsbI, PsbJ, PsbK, PsbL, PsbM, PsbT, PsbX, PsbY, PsbZ, Psb30/Ycf12, at least 3 peripheral proteins of the oxygen-evolving complex and a large number of cofactors. It forms dimeric complexes.

It localises to the plastid. It is found in the chloroplast thylakoid membrane. In terms of biological role, one of the components of the core complex of photosystem II (PSII). PSII is a light-driven water:plastoquinone oxidoreductase that uses light energy to abstract electrons from H(2)O, generating O(2) and a proton gradient subsequently used for ATP formation. It consists of a core antenna complex that captures photons, and an electron transfer chain that converts photonic excitation into a charge separation. This subunit is found at the monomer-monomer interface and is required for correct PSII assembly and/or dimerization. The sequence is that of Photosystem II reaction center protein L from Cyanidioschyzon merolae (strain NIES-3377 / 10D) (Unicellular red alga).